The sequence spans 187 residues: Benzene 1,2-dioxygenase subunit beta (187 aa).

This sequence belongs to the bacterial ring-hydroxylating dioxygenase beta subunit family. As to quaternary structure, this dioxygenase system consists of four proteins: the two subunits of the hydroxylase component (BnzA and BnzB), a ferredoxin (BnzC) and a ferredoxin reductase (BnzD). Requires [2Fe-2S] cluster as cofactor. It depends on Fe cation as a cofactor.

The catalysed reaction is benzene + NADH + O2 + H(+) = cis-1,2-dihydrobenzene-1,2-diol + NAD(+). It carries out the reaction toluene + NADH + O2 + H(+) = (1S,2R)-3-methylcyclohexa-3,5-diene-1,2-diol + NAD(+). The protein operates within aromatic compound metabolism; benzene degradation; catechol from benzene: step 1/2. It participates in xenobiotic degradation; toluene degradation. It functions in the pathway xenobiotic degradation; xylene degradation. In terms of biological role, catalyzes both the oxidation of benzene and toluene. The beta subunit may be responsible for the substrate specificity of the enzyme. The protein is Benzene 1,2-dioxygenase subunit beta (bnzB) of Pseudomonas putida (strain ATCC 700007 / DSM 6899 / JCM 31910 / BCRC 17059 / LMG 24140 / F1).